Consider the following 1615-residue polypeptide: Ferredoxin-dependent glutamate synthase, chloroplastic (1615 aa).

The N-terminal 52 residues, 1 to 52, are a transit peptide targeting the chloroplast; it reads MATLPRAAAAAAPSPAAALLPLPRAAPLLAGRAAARSAARRLRARGTRAPPL. Cys-97 functions as the Nucleophile in the catalytic mechanism. The Glutamine amidotransferase type-2 domain occupies 97–496; sequence CGVGFVANLK…PGMMITVDLQ (400 aa). 1175–1232 lines the FMN pocket; the sequence is LSETHQTLIQNGLRERVVLRVDGGFRSGLDVLMAAAMGADEYGFGSVAMIATGCVMAR. [3Fe-4S] cluster-binding residues include Cys-1228, Cys-1234, and Cys-1239.

It belongs to the glutamate synthase family. The cofactor is [3Fe-4S] cluster. It depends on FAD as a cofactor. Requires FMN as cofactor. Expressed in leaf blades and at lower levels in roots.

It localises to the plastid. The protein resides in the chloroplast. It carries out the reaction 2 oxidized [2Fe-2S]-[ferredoxin] + 2 L-glutamate = L-glutamine + 2 reduced [2Fe-2S]-[ferredoxin] + 2-oxoglutarate + 2 H(+). It participates in amino-acid biosynthesis; L-glutamate biosynthesis via GLT pathway; L-glutamate from 2-oxoglutarate and L-glutamine (ferredoxin route): step 1/1. It functions in the pathway energy metabolism; nitrogen metabolism. Involved in glutamate biosynthesis in leaf. Required for the reassimilation of ammonium ions generated during photorespiration. This chain is Ferredoxin-dependent glutamate synthase, chloroplastic (GLU), found in Oryza sativa subsp. japonica (Rice).